Consider the following 59-residue polypeptide: Large ribosomal subunit protein uL30 (59 aa).

Belongs to the universal ribosomal protein uL30 family. In terms of assembly, part of the 50S ribosomal subunit.

The sequence is that of Large ribosomal subunit protein uL30 from Pelotomaculum thermopropionicum (strain DSM 13744 / JCM 10971 / SI).